Here is a 259-residue protein sequence, read N- to C-terminus: Proteasome subunit beta type-4 (259 aa).

This sequence belongs to the peptidase T1B family. As to quaternary structure, the 26S proteasome consists of a 20S proteasome core and two 19S regulatory subunits. The 20S proteasome core is composed of 28 subunits that are arranged in four stacked rings, resulting in a barrel-shaped structure. The two end rings are each formed by seven alpha subunits, and the two central rings are each formed by seven beta subunits. The catalytic chamber with the active sites is on the inside of the barrel.

The protein localises to the cytoplasm. It localises to the nucleus. Non-catalytic component of the proteasome, a multicatalytic proteinase complex which is characterized by its ability to cleave peptides with Arg, Phe, Tyr, Leu, and Glu adjacent to the leaving group at neutral or slightly basic pH. The proteasome has an ATP-dependent proteolytic activity. This chain is Proteasome subunit beta type-4 (psmB4-1), found in Dictyostelium discoideum (Social amoeba).